The sequence spans 485 residues: NADH-quinone oxidoreductase subunit N (485 aa).

A run of 14 helical transmembrane segments spans residues 8–28 (LIALLPLLIVGLTVVVVMLSI), 35–55 (FLNATLSVVGLNAALLSLWFV), 75–95 (LYTGLVLLASLATCTFAYPWL), 105–125 (FYLLVLIAALGGILLANANHL), 127–147 (SLFLGIELISLPLFGLVGYAF), 159–179 (YTILSAAASSFLLFGMALVYA), 203–223 (LLAGLGLMIVGLGFKLSLVPF), 235–255 (PAPVSTFLATASKIAIFGVVM), 271–291 (VVLGVLAFASILFGNLMALTQ), 297–317 (LLGYSSISHLGYLLVALIALK), 326–346 (VGVYLAGYLFSSLGAFGVVSL), 374–394 (AVMTVMMLSLAGIPMTLGFIG), 408–427 (WWLTGAVVVGSAIGLYYYLR), and 455–475 (VVVLISALLVLVLGVWPQPLI).

The protein belongs to the complex I subunit 2 family. NDH-1 is composed of 13 different subunits. Subunits NuoA, H, J, K, L, M, N constitute the membrane sector of the complex.

It is found in the cell inner membrane. The enzyme catalyses a quinone + NADH + 5 H(+)(in) = a quinol + NAD(+) + 4 H(+)(out). In terms of biological role, NDH-1 shuttles electrons from NADH, via FMN and iron-sulfur (Fe-S) centers, to quinones in the respiratory chain. The immediate electron acceptor for the enzyme in this species is believed to be ubiquinone. Couples the redox reaction to proton translocation (for every two electrons transferred, four hydrogen ions are translocated across the cytoplasmic membrane), and thus conserves the redox energy in a proton gradient. This is NADH-quinone oxidoreductase subunit N from Cronobacter sakazakii (strain ATCC BAA-894) (Enterobacter sakazakii).